We begin with the raw amino-acid sequence, 559 residues long: 5'-AMP-activated protein kinase catalytic subunit alpha-1 (559 aa).

The 253-residue stretch at 27-279 (YILGDTLGVG…IKDIREHEWF (253 aa)) folds into the Protein kinase domain. The residue at position 32 (T32) is a Phosphothreonine. Residues 33 to 41 (LGVGTFGKV) and K56 contribute to the ATP site. D150 (proton acceptor) is an active-site residue. The residue at position 183 (T183) is a Phosphothreonine; by LKB1 and CaMKK2. Phosphothreonine is present on residues T269 and T355. The AIS stretch occupies residues 302 to 381 (EALKEVCEKF…PERVPFLVAE (80 aa)). Position 356 is a phosphoserine (S356). At S360 the chain carries Phosphoserine; by ULK1. T368 bears the Phosphothreonine; by ULK1 mark. A Phosphothreonine modification is found at T382. S397 carries the phosphoserine; by ULK1 modification. Residues S467 and S486 each carry the phosphoserine modification. A disordered region spans residues 484 to 536 (AKSGTATPQRSGSISNYRSCQRSDSDAEAQGKPSEVSLTSSVTSLDSSPVDVA). The segment covering 485-505 (KSGTATPQRSGSISNYRSCQR) has biased composition (polar residues). S486 is subject to Phosphoserine; by ULK1. T488 bears the Phosphothreonine; by ULK1 mark. T490 carries the phosphothreonine modification. Phosphoserine is present on residues S496, S508, S524, and S527. The segment covering 516 to 535 (PSEVSLTSSVTSLDSSPVDV) has biased composition (low complexity).

The protein belongs to the protein kinase superfamily. CAMK Ser/Thr protein kinase family. SNF1 subfamily. In terms of assembly, AMPK is a heterotrimer of an alpha catalytic subunit (PRKAA1 or PRKAA2), a beta (PRKAB1 or PRKAB2) and a gamma non-catalytic subunits (PRKAG1, PRKAG2 or PRKAG3). Interacts with FNIP1 and FNIP2. Requires Mg(2+) as cofactor. Post-translationally, ubiquitinated. Phosphorylated at Thr-183 by STK11/LKB1 in complex with STE20-related adapter-alpha (STRADA) pseudo kinase and CAB39. Also phosphorylated at Thr-183 by CAMKK2; triggered by a rise in intracellular calcium ions, without detectable changes in the AMP/ATP ratio. CAMKK1 can also phosphorylate Thr-183, but at a much lower level. Dephosphorylated by protein phosphatase 2A and 2C (PP2A and PP2C). Phosphorylated by ULK1 and ULK2; leading to negatively regulate AMPK activity and suggesting the existence of a regulatory feedback loop between ULK1, ULK2 and AMPK. There is some ambiguity for some phosphosites: Ser-360/Thr-368 and Ser-486/Thr-488. Dephosphorylated by PPM1A and PPM1B. In terms of processing, glycosylated; O-GlcNAcylated by OGT, promoting the AMP-activated protein kinase (AMPK) activity. In terms of tissue distribution, low expression in kidney, liver, lung, heart and brain.

It localises to the cytoplasm. The protein localises to the nucleus. It carries out the reaction L-seryl-[protein] + ATP = O-phospho-L-seryl-[protein] + ADP + H(+). The catalysed reaction is L-threonyl-[protein] + ATP = O-phospho-L-threonyl-[protein] + ADP + H(+). The enzyme catalyses L-seryl-[acetyl-CoA carboxylase] + ATP = O-phospho-L-seryl-[acetyl-CoA carboxylase] + ADP + H(+). It catalyses the reaction L-seryl-[3-hydroxy-3-methylglutaryl-coenzyme A reductase] + ATP = O-phospho-L-seryl-[3-hydroxy-3-methylglutaryl-coenzyme A reductase] + ADP + H(+). It carries out the reaction L-seryl-[tau protein] + ATP = O-phospho-L-seryl-[tau protein] + ADP + H(+). The catalysed reaction is L-threonyl-[tau protein] + ATP = O-phospho-L-threonyl-[tau protein] + ADP + H(+). Its activity is regulated as follows. Activated by phosphorylation on Thr-183. Binding of AMP to non-catalytic gamma subunit (PRKAG1, PRKAG2 or PRKAG3) results in allosteric activation, inducing phosphorylation on Thr-183. AMP-binding to gamma subunit also sustains activity by preventing dephosphorylation of Thr-183. ADP also stimulates Thr-183 phosphorylation, without stimulating already phosphorylated AMPK. ATP promotes dephosphorylation of Thr-183, rendering the enzyme inactive. Under physiological conditions AMPK mainly exists in its inactive form in complex with ATP, which is much more abundant than AMP. Selectively inhibited by compound C (6-[4-(2-Piperidin-1-yl-ethoxy)-phenyl)]-3-pyridin-4-yl-pyyrazolo[1,5-a] pyrimidine. Activated by resveratrol, a natural polyphenol present in red wine, and S17834, a synthetic polyphenol. In terms of biological role, catalytic subunit of AMP-activated protein kinase (AMPK), an energy sensor protein kinase that plays a key role in regulating cellular energy metabolism. In response to reduction of intracellular ATP levels, AMPK activates energy-producing pathways and inhibits energy-consuming processes: inhibits protein, carbohydrate and lipid biosynthesis, as well as cell growth and proliferation. AMPK acts via direct phosphorylation of metabolic enzymes, and by longer-term effects via phosphorylation of transcription regulators. Regulates lipid synthesis by phosphorylating and inactivating lipid metabolic enzymes such as ACACA, ACACB, GYS1, HMGCR and LIPE; regulates fatty acid and cholesterol synthesis by phosphorylating acetyl-CoA carboxylase (ACACA and ACACB) and hormone-sensitive lipase (LIPE) enzymes, respectively. Promotes lipolysis of lipid droplets by mediating phosphorylation of isoform 1 of CHKA (CHKalpha2). Regulates insulin-signaling and glycolysis by phosphorylating IRS1, PFKFB2 and PFKFB3. AMPK stimulates glucose uptake in muscle by increasing the translocation of the glucose transporter SLC2A4/GLUT4 to the plasma membrane, possibly by mediating phosphorylation of TBC1D4/AS160. Regulates transcription and chromatin structure by phosphorylating transcription regulators involved in energy metabolism such as CRTC2/TORC2, FOXO3, histone H2B, HDAC5, MEF2C, MLXIPL/ChREBP, EP300, HNF4A, p53/TP53, SREBF1, SREBF2 and PPARGC1A. Acts as a key regulator of glucose homeostasis in liver by phosphorylating CRTC2/TORC2, leading to CRTC2/TORC2 sequestration in the cytoplasm. In response to stress, phosphorylates 'Ser-36' of histone H2B (H2BS36ph), leading to promote transcription. Acts as a key regulator of cell growth and proliferation by phosphorylating FNIP1, TSC2, RPTOR, WDR24 and ATG1/ULK1: in response to nutrient limitation, negatively regulates the mTORC1 complex by phosphorylating RPTOR component of the mTORC1 complex and by phosphorylating and activating TSC2. Also phosphorylates and inhibits GATOR2 subunit WDR24 in response to nutrient limitation, leading to suppress glucose-mediated mTORC1 activation. In response to energetic stress, phosphorylates FNIP1, inactivating the non-canonical mTORC1 signaling, thereby promoting nuclear translocation of TFEB and TFE3, and inducing transcription of lysosomal or autophagy genes. In response to nutrient limitation, promotes autophagy by phosphorylating and activating ATG1/ULK1. In that process, it also activates WDR45/WIPI4. Phosphorylates CASP6, thereby preventing its autoprocessing and subsequent activation. In response to nutrient limitation, phosphorylates transcription factor FOXO3 promoting FOXO3 mitochondrial import. Also acts as a regulator of cellular polarity by remodeling the actin cytoskeleton; probably by indirectly activating myosin. AMPK also acts as a regulator of circadian rhythm by mediating phosphorylation of CRY1, leading to destabilize it. May regulate the Wnt signaling pathway by phosphorylating CTNNB1, leading to stabilize it. Also has tau-protein kinase activity: in response to amyloid beta A4 protein (APP) exposure, activated by CAMKK2, leading to phosphorylation of MAPT/TAU; however the relevance of such data remains unclear in vivo. Also phosphorylates CFTR, EEF2K, KLC1, NOS3 and SLC12A1. Regulates hepatic lipogenesis. Activated via SIRT3, represses sterol regulatory element-binding protein (SREBP) transcriptional activities and ATP-consuming lipogenesis to restore cellular energy balance. Upon stress, regulates mitochondrial fragmentation through phosphorylation of MTFR1L. The sequence is that of 5'-AMP-activated protein kinase catalytic subunit alpha-1 (Prkaa1) from Rattus norvegicus (Rat).